The primary structure comprises 423 residues: Tyrosine--tRNA ligase (423 aa).

Tyr35 serves as a coordination point for L-tyrosine. A 'HIGH' region motif is present at residues 40–49 (PTAASLHVGH). Positions 170 and 174 each coordinate L-tyrosine. Residues 231–235 (KFGKS) carry the 'KMSKS' region motif. Residue Lys234 participates in ATP binding. The 67-residue stretch at 353 to 419 (GPLVDLLVEV…GKKNLAAVEV (67 aa)) folds into the S4 RNA-binding domain.

It belongs to the class-I aminoacyl-tRNA synthetase family. TyrS type 1 subfamily. In terms of assembly, homodimer.

The protein resides in the cytoplasm. The enzyme catalyses tRNA(Tyr) + L-tyrosine + ATP = L-tyrosyl-tRNA(Tyr) + AMP + diphosphate + H(+). Catalyzes the attachment of tyrosine to tRNA(Tyr) in a two-step reaction: tyrosine is first activated by ATP to form Tyr-AMP and then transferred to the acceptor end of tRNA(Tyr). The protein is Tyrosine--tRNA ligase of Streptomyces griseus subsp. griseus (strain JCM 4626 / CBS 651.72 / NBRC 13350 / KCC S-0626 / ISP 5235).